A 298-amino-acid chain; its full sequence is ATP phosphoribosyltransferase (298 aa).

Belongs to the ATP phosphoribosyltransferase family. Long subfamily. It depends on Mg(2+) as a cofactor.

It is found in the cytoplasm. It catalyses the reaction 1-(5-phospho-beta-D-ribosyl)-ATP + diphosphate = 5-phospho-alpha-D-ribose 1-diphosphate + ATP. Its pathway is amino-acid biosynthesis; L-histidine biosynthesis; L-histidine from 5-phospho-alpha-D-ribose 1-diphosphate: step 1/9. Feedback inhibited by histidine. Catalyzes the condensation of ATP and 5-phosphoribose 1-diphosphate to form N'-(5'-phosphoribosyl)-ATP (PR-ATP). Has a crucial role in the pathway because the rate of histidine biosynthesis seems to be controlled primarily by regulation of HisG enzymatic activity. The sequence is that of ATP phosphoribosyltransferase (hisG) from Photobacterium profundum (strain SS9).